A 242-amino-acid polypeptide reads, in one-letter code: 4-hydroxy-tetrahydrodipicolinate reductase (242 aa).

Residues 79-81 (ATT) and 103-106 (SANM) each bind NAD(+). H135 functions as the Proton donor/acceptor in the catalytic mechanism. H136 is a binding site for (S)-2,3,4,5-tetrahydrodipicolinate. The active-site Proton donor is K139. Position 145-146 (145-146 (GT)) interacts with (S)-2,3,4,5-tetrahydrodipicolinate.

The protein belongs to the DapB family.

It is found in the cytoplasm. The enzyme catalyses (S)-2,3,4,5-tetrahydrodipicolinate + NAD(+) + H2O = (2S,4S)-4-hydroxy-2,3,4,5-tetrahydrodipicolinate + NADH + H(+). It carries out the reaction (S)-2,3,4,5-tetrahydrodipicolinate + NADP(+) + H2O = (2S,4S)-4-hydroxy-2,3,4,5-tetrahydrodipicolinate + NADPH + H(+). It participates in amino-acid biosynthesis; L-lysine biosynthesis via DAP pathway; (S)-tetrahydrodipicolinate from L-aspartate: step 4/4. Functionally, catalyzes the conversion of 4-hydroxy-tetrahydrodipicolinate (HTPA) to tetrahydrodipicolinate. This is 4-hydroxy-tetrahydrodipicolinate reductase from Staphylococcus carnosus (strain TM300).